A 423-amino-acid polypeptide reads, in one-letter code: UDP-N-acetylglucosamine 1-carboxyvinyltransferase 2 (423 aa).

Position 23–24 (23–24 (KN)) interacts with phosphoenolpyruvate. Arg-93 is a binding site for UDP-N-acetyl-alpha-D-glucosamine. Cys-117 acts as the Proton donor in catalysis. Cys-117 is modified (2-(S-cysteinyl)pyruvic acid O-phosphothioketal). UDP-N-acetyl-alpha-D-glucosamine is bound by residues 122-126 (RPIDQ), Asp-305, and Ile-327.

It belongs to the EPSP synthase family. MurA subfamily.

It is found in the cytoplasm. It catalyses the reaction phosphoenolpyruvate + UDP-N-acetyl-alpha-D-glucosamine = UDP-N-acetyl-3-O-(1-carboxyvinyl)-alpha-D-glucosamine + phosphate. The protein operates within cell wall biogenesis; peptidoglycan biosynthesis. In terms of biological role, cell wall formation. Adds enolpyruvyl to UDP-N-acetylglucosamine. The protein is UDP-N-acetylglucosamine 1-carboxyvinyltransferase 2 of Listeria monocytogenes serotype 4b (strain F2365).